The following is a 409-amino-acid chain: Tryptophan synthase beta chain (409 aa).

An N6-(pyridoxal phosphate)lysine modification is found at K95.

This sequence belongs to the TrpB family. As to quaternary structure, tetramer of two alpha and two beta chains. Pyridoxal 5'-phosphate is required as a cofactor.

The catalysed reaction is (1S,2R)-1-C-(indol-3-yl)glycerol 3-phosphate + L-serine = D-glyceraldehyde 3-phosphate + L-tryptophan + H2O. It participates in amino-acid biosynthesis; L-tryptophan biosynthesis; L-tryptophan from chorismate: step 5/5. In terms of biological role, the beta subunit is responsible for the synthesis of L-tryptophan from indole and L-serine. The chain is Tryptophan synthase beta chain from Pseudomonas savastanoi pv. phaseolicola (Pseudomonas syringae pv. phaseolicola).